Reading from the N-terminus, the 306-residue chain is D-alanine--D-alanine ligase (306 aa).

The ATP-grasp domain maps to 105–300 (KMIWQAAGIS…FDELVIQILE (196 aa)). An ATP-binding site is contributed by 131–186 (TDRLGLPLIIKPAREGSTIGLNKVDYAQDMQSAYQTAAQHDSLVIAEQFIQGIELT). Mg(2+) contacts are provided by Asp254, Glu267, and Asn269.

It belongs to the D-alanine--D-alanine ligase family. It depends on Mg(2+) as a cofactor. Requires Mn(2+) as cofactor.

The protein resides in the cytoplasm. It carries out the reaction 2 D-alanine + ATP = D-alanyl-D-alanine + ADP + phosphate + H(+). It functions in the pathway cell wall biogenesis; peptidoglycan biosynthesis. Cell wall formation. This is D-alanine--D-alanine ligase from Nitrosomonas eutropha (strain DSM 101675 / C91 / Nm57).